The following is a 161-amino-acid chain: uncharacterized protein (161 aa).

This sequence to R.leguminosarum PsiB.

This is an uncharacterized protein from Sinorhizobium fredii (strain NBRC 101917 / NGR234).